Consider the following 288-residue polypeptide: NAD(P)H-hydrate epimerase (288 aa).

A mitochondrion-targeting transit peptide spans 1–59 (MSGLRALLGLGLPVAGSRLPRVRVQAGACRARPTWWGPQRLISGGRGDVEGMASSAVKY). The region spanning 65–275 (AQAVDQELFN…ALEKKYQLNL (211 aa)) is the YjeF N-terminal domain. Residue 119-123 (NNGGD) participates in (6S)-NADPHX binding. Asn-120 is a K(+) binding site. Lys-144 is subject to N6-succinyllysine. Asp-185 provides a ligand contact to K(+). (6S)-NADPHX-binding positions include 189-195 (GFSFKGE) and Asp-218. Ser-221 lines the K(+) pocket.

It belongs to the NnrE/AIBP family. Homodimer. Interacts with APOA1 and APOA2. K(+) is required as a cofactor. In terms of processing, undergoes physiological phosphorylation during sperm capacitation, downstream to PKA activation.

It localises to the mitochondrion. The protein localises to the secreted. It catalyses the reaction (6R)-NADHX = (6S)-NADHX. It carries out the reaction (6R)-NADPHX = (6S)-NADPHX. In terms of biological role, catalyzes the epimerization of the S- and R-forms of NAD(P)HX, a damaged form of NAD(P)H that is a result of enzymatic or heat-dependent hydration. This is a prerequisite for the S-specific NAD(P)H-hydrate dehydratase to allow the repair of both epimers of NAD(P)HX. Accelerates cholesterol efflux from endothelial cells to high-density lipoprotein (HDL) and thereby regulates angiogenesis. This is NAD(P)H-hydrate epimerase from Sus scrofa (Pig).